A 421-amino-acid polypeptide reads, in one-letter code: Queuine tRNA-ribosyltransferase accessory subunit 2 (421 aa).

Residues Cys328, Cys330, Cys333, and His359 each contribute to the Zn(2+) site.

The protein belongs to the queuine tRNA-ribosyltransferase family. QTRT2 subfamily. Heterodimer of a catalytic subunit and an accessory subunit. Zn(2+) serves as cofactor.

It localises to the cytoplasm. Non-catalytic subunit of the queuine tRNA-ribosyltransferase (TGT) that catalyzes the base-exchange of a guanine (G) residue with queuine (Q) at position 34 (anticodon wobble position) in tRNAs with GU(N) anticodons (tRNA-Asp, -Asn, -His and -Tyr), resulting in the hypermodified nucleoside queuosine (7-(((4,5-cis-dihydroxy-2-cyclopenten-1-yl)amino)methyl)-7-deazaguanosine). The protein is Queuine tRNA-ribosyltransferase accessory subunit 2 of Aedes aegypti (Yellowfever mosquito).